The following is a 503-amino-acid chain: Ribose import ATP-binding protein RbsA 1 (503 aa).

ABC transporter domains are found at residues 5–241 (IALE…VGRA) and 253–495 (IGQP…AGIE). 37-44 (GENGAGKS) is an ATP binding site.

It belongs to the ABC transporter superfamily. Ribose importer (TC 3.A.1.2.1) family. In terms of assembly, the complex is composed of an ATP-binding protein (RbsA), two transmembrane proteins (RbsC) and a solute-binding protein (RbsB).

It localises to the cell inner membrane. The enzyme catalyses D-ribose(out) + ATP + H2O = D-ribose(in) + ADP + phosphate + H(+). Functionally, part of the ABC transporter complex RbsABC involved in ribose import. Responsible for energy coupling to the transport system. In Rhizobium meliloti (strain 1021) (Ensifer meliloti), this protein is Ribose import ATP-binding protein RbsA 1.